Here is a 316-residue protein sequence, read N- to C-terminus: Pantothenate kinase (316 aa).

95 to 102 (GSVAVGKS) contacts ATP.

The protein belongs to the prokaryotic pantothenate kinase family.

Its subcellular location is the cytoplasm. The catalysed reaction is (R)-pantothenate + ATP = (R)-4'-phosphopantothenate + ADP + H(+). Its pathway is cofactor biosynthesis; coenzyme A biosynthesis; CoA from (R)-pantothenate: step 1/5. The protein is Pantothenate kinase of Shewanella sediminis (strain HAW-EB3).